A 182-amino-acid polypeptide reads, in one-letter code: Dynactin subunit 5 (182 aa).

Met1 bears the N-acetylmethionine mark.

Belongs to the dynactin subunits 5/6 family. Dynactin subunit 5 subfamily. Subunit of dynactin, a multiprotein complex part of a tripartite complex with dynein and a adapter, such as BICDL1, BICD2 or HOOK3. The dynactin complex is built around ACTR1A/ACTB filament and consists of an actin-related filament composed of a shoulder domain, a pointed end and a barbed end. Its length is defined by its flexible shoulder domain. The soulder is composed of 2 DCTN1 subunits, 4 DCTN2 and 2 DCTN3. The 4 DCNT2 (via N-terminus) bind the ACTR1A filament and act as molecular rulers to determine the length. The pointed end is important for binding dynein-dynactin cargo adapters. Consists of 4 subunits: ACTR10, DCNT4, DCTN5 and DCTN6. Within the complex DCTN6 forms a heterodimer with DCTN5. The barbed end is composed of a CAPZA1:CAPZB heterodimers, which binds ACTR1A/ACTB filament and dynactin and stabilizes dynactin. Interacts with N4BP2L1.

Its subcellular location is the cytoplasm. The protein localises to the cytoskeleton. It is found in the chromosome. The protein resides in the centromere. It localises to the kinetochore. Part of the dynactin complex that activates the molecular motor dynein for ultra-processive transport along microtubules. The sequence is that of Dynactin subunit 5 from Homo sapiens (Human).